Here is a 491-residue protein sequence, read N- to C-terminus: Trigger factor (491 aa).

Positions 169–254 (GDRVTIDYLG…VKDVAAAAPI (86 aa)) constitute a PPIase FKBP-type domain. The segment at 433–491 (KTVSKDELMAEDEAEDKPAKKAPAKKKAAAKAEAGEGEEAAAPKKKAPAKKKAADDSAE) is disordered. Residues 452–461 (KKAPAKKKAA) are compositionally biased toward basic residues.

It belongs to the FKBP-type PPIase family. Tig subfamily.

It localises to the cytoplasm. It catalyses the reaction [protein]-peptidylproline (omega=180) = [protein]-peptidylproline (omega=0). Its function is as follows. Involved in protein export. Acts as a chaperone by maintaining the newly synthesized protein in an open conformation. Functions as a peptidyl-prolyl cis-trans isomerase. This chain is Trigger factor, found in Sinorhizobium fredii (strain NBRC 101917 / NGR234).